We begin with the raw amino-acid sequence, 251 residues long: Imidazole glycerol phosphate synthase subunit HisF (251 aa).

Residues D11 and D130 contribute to the active site.

The protein belongs to the HisA/HisF family. In terms of assembly, heterodimer of HisH and HisF.

It localises to the cytoplasm. It carries out the reaction 5-[(5-phospho-1-deoxy-D-ribulos-1-ylimino)methylamino]-1-(5-phospho-beta-D-ribosyl)imidazole-4-carboxamide + L-glutamine = D-erythro-1-(imidazol-4-yl)glycerol 3-phosphate + 5-amino-1-(5-phospho-beta-D-ribosyl)imidazole-4-carboxamide + L-glutamate + H(+). Its pathway is amino-acid biosynthesis; L-histidine biosynthesis; L-histidine from 5-phospho-alpha-D-ribose 1-diphosphate: step 5/9. Its function is as follows. IGPS catalyzes the conversion of PRFAR and glutamine to IGP, AICAR and glutamate. The HisF subunit catalyzes the cyclization activity that produces IGP and AICAR from PRFAR using the ammonia provided by the HisH subunit. The chain is Imidazole glycerol phosphate synthase subunit HisF from Chlorobium chlorochromatii (strain CaD3).